The following is a 1549-amino-acid chain: Structural maintenance of chromosomes protein 4 (1549 aa).

The interval 1-78 (MPPKTSAAPP…LFSLQLPSRP (78 aa)) is disordered. The segment covering 26–36 (KPQKKTTKPVN) has biased composition (basic residues). Residues 37 to 59 (RHKEGSKDPEEELQRAVNEKFDG) are compositionally biased toward basic and acidic residues. 121-128 (GPNGSGKS) serves as a coordination point for ATP. Positions 326-604 (MKLEQRRRQR…QNSSCSSSNK (279 aa)) form a coiled coil. Composition is skewed to basic and acidic residues over residues 396-407 (LSDLGTEETRRK) and 420-444 (AEAE…AERK). 2 disordered regions span residues 396 to 444 (LSDL…AERK) and 460 to 485 (KTAN…EEQK). In terms of domain architecture, SMC hinge spans 619 to 734 (KSFHGRLGDL…GDSTQEAQRM (116 aa)). 2 coiled-coil regions span residues 786-1058 (KAAE…KVNR) and 1144-1182 (EKIN…SIKA). Residues 1440–1459 (IQTTRDVTSRPQSKATTSGD) are compositionally biased toward polar residues. The segment at 1440–1549 (IQTTRDVTSR…AIVDDDDDME (110 aa)) is disordered. A compositionally biased stretch (basic and acidic residues) spans 1460–1474 (GTERPASRSASRPES). Residues 1510-1523 (TPPSKRSNSASTPK) are compositionally biased toward polar residues.

Belongs to the SMC family. SMC4 subfamily. In terms of assembly, component of the condensin I complex, which contains the mix-1/SMC2 and smc-4/SMC4 heterodimer, and three non SMC subunits that probably regulate the complex: dpy-26, capg-1 and dpy-28. Within the complex, interacts with mix-1, dpy-26, capg-1 and dpy-28. Component of the condensin II complex, which contains the mix-1/SMC2 and smc-4/SMC4 heterodimer, and three non SMC subunits, kle-2, capg-2 and hcp-6 that probably regulate the complex. Within the complex, interacts with mix-1, kle-2, capg-2 and hcp-6. Interacts with smcl-1.

The protein localises to the nucleus. It is found in the chromosome. Central component of the condensin I complex, a complex required for conversion of interphase chromatin into mitotic-like condense chromosomes. The condensin I complex introduces positive supercoils into relaxed DNA in the presence of type I topoisomerases. Converts nicked DNA into positive knotted forms in the presence of type II topoisomerases. Also a central component of the condensin II complex, a complex that seems to play a role in prophase chromosome condensation. Both the condensin complex I and II play a role in meiotic and mitotic chromosome segregation. Plays a role in robust cytokinesis upon the presence of chromatin obstructions. In Caenorhabditis elegans, this protein is Structural maintenance of chromosomes protein 4 (smc-4).